A 466-amino-acid chain; its full sequence is Cysteine--tRNA ligase (466 aa).

Residue Cys28 coordinates Zn(2+). The 'HIGH' region signature appears at 30–40 (PTVYNYIHIGN). Residues Cys208, His233, and Glu237 each contribute to the Zn(2+) site. Residues 265-269 (KMSKS) carry the 'KMSKS' region motif. Lys268 lines the ATP pocket.

It belongs to the class-I aminoacyl-tRNA synthetase family. As to quaternary structure, monomer. It depends on Zn(2+) as a cofactor.

The protein resides in the cytoplasm. The enzyme catalyses tRNA(Cys) + L-cysteine + ATP = L-cysteinyl-tRNA(Cys) + AMP + diphosphate. This is Cysteine--tRNA ligase from Staphylococcus saprophyticus subsp. saprophyticus (strain ATCC 15305 / DSM 20229 / NCIMB 8711 / NCTC 7292 / S-41).